A 538-amino-acid polypeptide reads, in one-letter code: Chaperonin GroEL 1 (538 aa).

ATP-binding positions include 29-32 (TLGP), 86-90 (DGTTT), Gly-413, 478-480 (NAA), and Asp-494.

This sequence belongs to the chaperonin (HSP60) family. Forms a cylinder of 14 subunits composed of two heptameric rings stacked back-to-back. Interacts with the co-chaperonin GroES.

It localises to the cytoplasm. It catalyses the reaction ATP + H2O + a folded polypeptide = ADP + phosphate + an unfolded polypeptide.. Together with its co-chaperonin GroES, plays an essential role in assisting protein folding. The GroEL-GroES system forms a nano-cage that allows encapsulation of the non-native substrate proteins and provides a physical environment optimized to promote and accelerate protein folding. The protein is Chaperonin GroEL 1 of Corynebacterium glutamicum (strain ATCC 13032 / DSM 20300 / JCM 1318 / BCRC 11384 / CCUG 27702 / LMG 3730 / NBRC 12168 / NCIMB 10025 / NRRL B-2784 / 534).